The following is a 322-amino-acid chain: ATP-dependent 6-phosphofructokinase (322 aa).

Residues G12, 73-74, and 103-106 contribute to the ATP site; these read RF and GDGT. Position 104 (D104) interacts with Mg(2+). Substrate is bound at residue 126–128; the sequence is TID. The active-site Proton acceptor is the D128. R155 is a binding site for ADP. Residues R163 and 170 to 172 each bind substrate; that span reads MGR. Residues 186–188, K212, and 214–216 contribute to the ADP site; these read GSE and KPS. Residues E223, R245, and 251-254 each bind substrate; that span reads HTQR.

This sequence belongs to the phosphofructokinase type A (PFKA) family. ATP-dependent PFK group I subfamily. Prokaryotic clade 'B1' sub-subfamily. As to quaternary structure, homotetramer. Mg(2+) serves as cofactor.

It localises to the cytoplasm. The enzyme catalyses beta-D-fructose 6-phosphate + ATP = beta-D-fructose 1,6-bisphosphate + ADP + H(+). The protein operates within carbohydrate degradation; glycolysis; D-glyceraldehyde 3-phosphate and glycerone phosphate from D-glucose: step 3/4. With respect to regulation, allosterically activated by ADP and other diphosphonucleosides, and allosterically inhibited by phosphoenolpyruvate. In terms of biological role, catalyzes the phosphorylation of D-fructose 6-phosphate to fructose 1,6-bisphosphate by ATP, the first committing step of glycolysis. The protein is ATP-dependent 6-phosphofructokinase of Mesomycoplasma hyopneumoniae (strain J / ATCC 25934 / NCTC 10110) (Mycoplasma hyopneumoniae).